The sequence spans 621 residues: Na(+)/H(+) antiporter NhaA (621 aa).

Residues 1 to 430 (MPASSFGESS…LGWLIFKVAA (430 aa)) form a na(+)/H(+) antiporter NhaA region. 11 helical membrane passes run 27-47 (GAAV…NSPL), 72-92 (LHHW…GLEV), 109-129 (LALI…VLIV), 139-159 (GWGA…AIVG), 168-188 (VFLL…IGIV), 192-212 (EIRI…WLLG), 223-243 (VLIV…ASLA), 300-320 (FLRL…NAGV), 339-359 (VIAG…LVAV), 375-395 (VFGG…IIGL), and 409-429 (VGVL…FKVA). A Thioredoxin domain is found at 431–578 (QRWGEKTADL…VERDLASAVA (148 aa)).

It in the N-terminal section; belongs to the NhaA Na(+)/H(+) (TC 2.A.33) antiporter family.

It is found in the cell inner membrane. It carries out the reaction Na(+)(in) + 2 H(+)(out) = Na(+)(out) + 2 H(+)(in). In terms of biological role, na(+)/H(+) antiporter that extrudes sodium in exchange for external protons. This chain is Na(+)/H(+) antiporter NhaA, found in Herminiimonas arsenicoxydans.